The sequence spans 620 residues: Protein AFR1 (620 aa).

Residues 1 to 12 are compositionally biased toward polar residues; sequence MEGSYLSAQENQ. The disordered stretch occupies residues 1-20; the sequence is MEGSYLSAQENQPIPERLIP. Phosphoserine is present on residues S472 and S526.

To yeast YER158C.

In terms of biological role, acts in conjunction with the alpha-factor receptor to promote morphogenesis and adaptation. In Saccharomyces cerevisiae (strain ATCC 204508 / S288c) (Baker's yeast), this protein is Protein AFR1 (AFR1).